We begin with the raw amino-acid sequence, 476 residues long: ATP synthase subunit beta (476 aa).

Residue 154–161 (GGAGVGKT) coordinates ATP.

The protein belongs to the ATPase alpha/beta chains family. As to quaternary structure, F-type ATPases have 2 components, CF(1) - the catalytic core - and CF(0) - the membrane proton channel. CF(1) has five subunits: alpha(3), beta(3), gamma(1), delta(1), epsilon(1). CF(0) has three main subunits: a(1), b(2) and c(9-12). The alpha and beta chains form an alternating ring which encloses part of the gamma chain. CF(1) is attached to CF(0) by a central stalk formed by the gamma and epsilon chains, while a peripheral stalk is formed by the delta and b chains.

It is found in the cell inner membrane. It catalyses the reaction ATP + H2O + 4 H(+)(in) = ADP + phosphate + 5 H(+)(out). Functionally, produces ATP from ADP in the presence of a proton gradient across the membrane. The catalytic sites are hosted primarily by the beta subunits. This Nitrobacter hamburgensis (strain DSM 10229 / NCIMB 13809 / X14) protein is ATP synthase subunit beta.